Reading from the N-terminus, the 156-residue chain is Ribosomal RNA large subunit methyltransferase H (156 aa).

S-adenosyl-L-methionine is bound by residues Leu-73, Gly-104, and 123 to 128; that span reads LSRLTL.

The protein belongs to the RNA methyltransferase RlmH family. In terms of assembly, homodimer.

The protein localises to the cytoplasm. The catalysed reaction is pseudouridine(1915) in 23S rRNA + S-adenosyl-L-methionine = N(3)-methylpseudouridine(1915) in 23S rRNA + S-adenosyl-L-homocysteine + H(+). Specifically methylates the pseudouridine at position 1915 (m3Psi1915) in 23S rRNA. The protein is Ribosomal RNA large subunit methyltransferase H of Thiobacillus denitrificans (strain ATCC 25259 / T1).